We begin with the raw amino-acid sequence, 557 residues long: Vanadium-dependent bromoperoxidase (557 aa).

A Pyrrolidone carboxylic acid modification is found at Q1. Residues 1-22 (QTCSTSDDADDPTPPNERDDEA) form a disordered region. C77 and C86 are disulfide-bonded. Positions 341 and 349 each coordinate vanadate. Residue H411 is part of the active site. Vanadate contacts are provided by S416, G417, and H418. H418 is an active-site residue. C441 and C462 form a disulfide bridge. Positions 480 and 486 each coordinate vanadate. A disulfide bridge links C544 with C555.

The protein belongs to the vanadium-dependent haloperoxidase family. Homodimer; disulfide-linked. Vanadate serves as cofactor.

It carries out the reaction RH + Br(-) + H2O2 = RBr + 2 H2O.. Its function is as follows. Catalyzes the halogenation of organic substrates in the presence of hydrogen peroxide. This chain is Vanadium-dependent bromoperoxidase, found in Ascophyllum nodosum (Knotted wrack).